A 283-amino-acid polypeptide reads, in one-letter code: Pantothenate synthetase (283 aa).

Residue 30–37 (MGYLHEGH) coordinates ATP. Histidine 37 (proton donor) is an active-site residue. A (R)-pantoate-binding site is contributed by glutamine 61. Beta-alanine is bound at residue glutamine 61. An ATP-binding site is contributed by 147 to 150 (GLKD). Position 153 (glutamine 153) interacts with (R)-pantoate. ATP-binding positions include valine 176 and 184 to 187 (KSSR).

The protein belongs to the pantothenate synthetase family. In terms of assembly, homodimer.

The protein resides in the cytoplasm. The enzyme catalyses (R)-pantoate + beta-alanine + ATP = (R)-pantothenate + AMP + diphosphate + H(+). It participates in cofactor biosynthesis; (R)-pantothenate biosynthesis; (R)-pantothenate from (R)-pantoate and beta-alanine: step 1/1. Catalyzes the condensation of pantoate with beta-alanine in an ATP-dependent reaction via a pantoyl-adenylate intermediate. This chain is Pantothenate synthetase, found in Halalkalibacterium halodurans (strain ATCC BAA-125 / DSM 18197 / FERM 7344 / JCM 9153 / C-125) (Bacillus halodurans).